The sequence spans 148 residues: Endothelial differentiation-related factor 1 homolog (148 aa).

Positions M1 to Q26 are disordered. Positions I81 to K135 constitute an HTH cro/C1-type domain. The H-T-H motif DNA-binding region spans Q92–S111.

Its subcellular location is the nucleus. Its function is as follows. Probable transcriptional coactivator. The sequence is that of Endothelial differentiation-related factor 1 homolog (EDF1) from Gallus gallus (Chicken).